A 37-amino-acid chain; its full sequence is Cytochrome b6-f complex subunit 5 (37 aa).

Residues 5-25 (LLSGIVLGLMPVTLAGLFTTA) form a helical membrane-spanning segment.

The protein belongs to the PetG family. In terms of assembly, the 4 large subunits of the cytochrome b6-f complex are cytochrome b6, subunit IV (17 kDa polypeptide, PetD), cytochrome f and the Rieske protein, while the 4 small subunits are PetG, PetL, PetM and PetN. The complex functions as a dimer.

It localises to the plastid. The protein localises to the chloroplast thylakoid membrane. Component of the cytochrome b6-f complex, which mediates electron transfer between photosystem II (PSII) and photosystem I (PSI), cyclic electron flow around PSI, and state transitions. PetG is required for either the stability or assembly of the cytochrome b6-f complex. This chain is Cytochrome b6-f complex subunit 5, found in Ostreococcus tauri.